The following is a 615-amino-acid chain: MEIFMPKLRSATSTQGRNMAGARSLWRATGMKEGDFGKPIIAVVNSFTQFVPGHVHLHDIGQMVVKQIEAAGGVAKEFNTIAVDDGIAMGHGGMLYSLPSRDLIADSVEYMVNAHCADAMVCISNCDKITPGMLMAAMRLNIPTIFVSGGPMEAGKTKLSDQLIKLDLIDAMIQSADKNVSDSDVDAIERSACPTCGSCSGMFTANSMNCLTEALGLSLPGNGSCLATHADRKQLFLDAATQIVELCKRHYEQDDYSVLPRSIATKAAFENAMSLDIAMGGSTNTVLHLLAVAQEAEVDFTMADIDRLSRIVPCLSKVAPNTNKYHMEDVHRAGGVMAILGELDRANLLHHDTKTVLGLTFAEQLAKYDIKLTRDEAVKTFYRSGPAGIRTTEAFSQDCRWETLDDDRENGCIRDKAHAYSQDGGLAMLSGNIALDGCIVKTAGVDESILKFTGEAIVFESQEDAVDGILGGKVKAGHVVVIRYEGPKGGPGMQEMLYPTSYLKSMGLGKACALLTDGRFSGGTSGLSIGHCSPEAASGGTIGLVRNGDIIAIDIPNRSIQLQVSDEELATRRAEQDVKGWKPANRAREVSFALKVFGHFATSADKGAVRDKTKL.

Position 85 (Asp-85) interacts with Mg(2+). Position 126 (Cys-126) interacts with [2Fe-2S] cluster. Mg(2+) is bound by residues Asp-127 and Lys-128. The residue at position 128 (Lys-128) is an N6-carboxylysine. A [2Fe-2S] cluster-binding site is contributed by Cys-199. A Mg(2+)-binding site is contributed by Glu-495. Ser-521 serves as the catalytic Proton acceptor.

Belongs to the IlvD/Edd family. Homodimer. Requires [2Fe-2S] cluster as cofactor. It depends on Mg(2+) as a cofactor.

The enzyme catalyses (2R)-2,3-dihydroxy-3-methylbutanoate = 3-methyl-2-oxobutanoate + H2O. It catalyses the reaction (2R,3R)-2,3-dihydroxy-3-methylpentanoate = (S)-3-methyl-2-oxopentanoate + H2O. It participates in amino-acid biosynthesis; L-isoleucine biosynthesis; L-isoleucine from 2-oxobutanoate: step 3/4. The protein operates within amino-acid biosynthesis; L-valine biosynthesis; L-valine from pyruvate: step 3/4. In terms of biological role, functions in the biosynthesis of branched-chain amino acids. Catalyzes the dehydration of (2R,3R)-2,3-dihydroxy-3-methylpentanoate (2,3-dihydroxy-3-methylvalerate) into 2-oxo-3-methylpentanoate (2-oxo-3-methylvalerate) and of (2R)-2,3-dihydroxy-3-methylbutanoate (2,3-dihydroxyisovalerate) into 2-oxo-3-methylbutanoate (2-oxoisovalerate), the penultimate precursor to L-isoleucine and L-valine, respectively. This chain is Dihydroxy-acid dehydratase, found in Mannheimia succiniciproducens (strain KCTC 0769BP / MBEL55E).